A 136-amino-acid polypeptide reads, in one-letter code: Nanos homolog 2 (136 aa).

The disordered stretch occupies residues 27 to 51 (KQRQEGEVAEEPNSRPQEKSEQDLE). Residues 28–48 (QRQEGEVAEEPNSRPQEKSEQ) are compositionally biased toward basic and acidic residues. A Nanos-type zinc finger spans residues 60–114 (ICNFCKHNGESRHVYTSHQLKTPEGVVVCPILRHYVCPLCGATGDQAHTLKYCPL). Cys-61, Cys-64, His-77, Cys-88, Cys-96, Cys-99, His-107, and Cys-112 together coordinate Zn(2+). Short sequence motifs (C2HC) lie at residues 61-88 (CNFC…VVVC) and 96-112 (CPLC…LKYC).

Belongs to the nanos family. Interacts with CNOT1, CNOT3, CNOT6L, CNOT7 and CNOT9. As to expression, predominantly expressed in male germ cells. Expressed in self-renewing spermatogonial stem cells and developing gonads.

The protein resides in the cytoplasm. The protein localises to the P-body. Its subcellular location is the perinuclear region. Functionally, plays a key role in the sexual differentiation of germ cells by promoting the male fate but suppressing the female fate. Represses the female fate pathways by suppressing meiosis, which in turn results in the promotion of the male fate. Maintains the suppression of meiosis by preventing STRA8 expression, which is required for premeiotic DNA replication, after CYP26B1 is decreased. Regulates the localization of the CCR4-NOT deadenylation complex to P-bodies and plays a role in recruiting the complex to trigger the degradation of mRNAs involved in meiosis. Required for the maintenance of the spermatogonial stem cell population. Not essential for the assembly of P-bodies but is required for the maintenance of their normal state. This Mus musculus (Mouse) protein is Nanos homolog 2 (Nanos2).